Here is a 164-residue protein sequence, read N- to C-terminus: HTH-type transcriptional regulator IscR (164 aa).

In terms of domain architecture, HTH rrf2-type spans 2–131 (RLTSKGRYAV…SSISLEELVN (130 aa)). Residues 28–51 (LADISERQGISLSYLEQLFSRLRK) constitute a DNA-binding region (H-T-H motif). Residues cysteine 92, cysteine 98, and cysteine 104 each contribute to the [2Fe-2S] cluster site. Positions 141–164 (RQDNDKRRAPNGRAQETINVNLRP) are disordered. A compositionally biased stretch (polar residues) spans 154 to 164 (AQETINVNLRP).

The cofactor is [2Fe-2S] cluster.

Its function is as follows. Regulates the transcription of several operons and genes involved in the biogenesis of Fe-S clusters and Fe-S-containing proteins. This is HTH-type transcriptional regulator IscR from Photorhabdus laumondii subsp. laumondii (strain DSM 15139 / CIP 105565 / TT01) (Photorhabdus luminescens subsp. laumondii).